A 77-amino-acid polypeptide reads, in one-letter code: Large ribosomal subunit protein bL28 (77 aa).

The protein belongs to the bacterial ribosomal protein bL28 family.

This is Large ribosomal subunit protein bL28 from Laribacter hongkongensis (strain HLHK9).